The chain runs to 289 residues: Bis(5'-nucleosyl)-tetraphosphatase, symmetrical (289 aa).

The protein belongs to the Ap4A hydrolase family.

It catalyses the reaction P(1),P(4)-bis(5'-adenosyl) tetraphosphate + H2O = 2 ADP + 2 H(+). Functionally, hydrolyzes diadenosine 5',5'''-P1,P4-tetraphosphate to yield ADP. The chain is Bis(5'-nucleosyl)-tetraphosphatase, symmetrical from Yersinia pseudotuberculosis serotype O:3 (strain YPIII).